Consider the following 35-residue polypeptide: Potassium channel toxin alpha-KTx 23.2 (35 aa).

Intrachain disulfides connect Cys-6–Cys-26, Cys-12–Cys-31, and Cys-16–Cys-33.

Belongs to the short scorpion toxin superfamily. Potassium channel inhibitor family. Alpha-KTx 23 subfamily. As to expression, expressed by the venom gland.

It localises to the secreted. Its function is as follows. Selectively and irreversibly binds (K(d)=2.9 pM) and blocks Kv1.3/KCNA3 potassium channels of human T-lymphocytes. Weakly blocks Kv1.2/KCNA2 (9%). The chain is Potassium channel toxin alpha-KTx 23.2 from Vaejovis mexicanus smithi (Mexican scorpion).